The chain runs to 449 residues: Trigger factor (449 aa).

One can recognise a PPIase FKBP-type domain in the interval 169–254; sequence GDRITVDFVG…AKQVEAPGEL (86 aa).

The protein belongs to the FKBP-type PPIase family. Tig subfamily.

Its subcellular location is the cytoplasm. The enzyme catalyses [protein]-peptidylproline (omega=180) = [protein]-peptidylproline (omega=0). Its function is as follows. Involved in protein export. Acts as a chaperone by maintaining the newly synthesized protein in an open conformation. Functions as a peptidyl-prolyl cis-trans isomerase. The sequence is that of Trigger factor from Azorhizobium caulinodans (strain ATCC 43989 / DSM 5975 / JCM 20966 / LMG 6465 / NBRC 14845 / NCIMB 13405 / ORS 571).